Here is a 264-residue protein sequence, read N- to C-terminus: Indole-3-glycerol phosphate synthase (264 aa).

Belongs to the TrpC family.

The catalysed reaction is 1-(2-carboxyphenylamino)-1-deoxy-D-ribulose 5-phosphate + H(+) = (1S,2R)-1-C-(indol-3-yl)glycerol 3-phosphate + CO2 + H2O. Its pathway is amino-acid biosynthesis; L-tryptophan biosynthesis; L-tryptophan from chorismate: step 4/5. This chain is Indole-3-glycerol phosphate synthase, found in Polaromonas sp. (strain JS666 / ATCC BAA-500).